The following is a 167-amino-acid chain: Large ribosomal subunit protein uL23 (167 aa).

A large ribosomal subunit protein uL23 region spans residues 1 to 130 (MNVNEIIKGP…ELEAKNKEIA (130 aa)). Disordered regions lie at residues 91–112 (FEDE…TDEK) and 137–167 (QAEL…NSAK). Composition is skewed to basic and acidic residues over residues 97-112 (QDQK…TDEK) and 137-157 (QAEL…KIEN). The tract at residues 131–167 (EKLAKKQAELAKKESETNENQEKKIENQTENQENSAK) is unknown. The segment covering 158-167 (QTENQENSAK) has biased composition (polar residues).

It belongs to the universal ribosomal protein uL23 family. As to quaternary structure, part of the 50S ribosomal subunit. Contacts protein L29, and trigger factor when it is bound to the ribosome.

In terms of biological role, one of the early assembly proteins it binds 23S rRNA. One of the proteins that surrounds the polypeptide exit tunnel on the outside of the ribosome. Forms the main docking site for trigger factor binding to the ribosome. The protein is Large ribosomal subunit protein uL23 of Mesomycoplasma hyopneumoniae (strain 7448) (Mycoplasma hyopneumoniae).